The following is a 431-amino-acid chain: MKLSEVFSKLIEKIRGVDYIDEAVLQELSREIQRSLLKADVPLELVKAFTDSAVKRIREEKPPAGIPPREYLVYVLYEELVKLLGGEQPAEFKPTKKPYVVLLLGVEGSGKTTTAAKLAKYLAKRGYKVGLVETDTIRPAAFDQLKQLAEKIGVPFYGERDGKNAVEIAVRGVQNFKNMDVVIIDTAGRHRNEEELLKEVKAIYDAVKPDEVFLVIDATVGKLAAAQAEAFMKYLPIHSVIITKMDSTARGGGALAAVAKTGARVKFIGVGEDVDEFELFNPRKFVARVLGMGDLDALVEKIKAVFEEDKVLEELESGRLDLLTFKKQIDSLLKLGPLSKVFQLLPSNFAIKVSEEQIELSQKNLRKWKAILSSMTMEELKHPEVLNASRIRRIAMGAGVTPKDVKEMLTVFENMKKMSKMLKRQMRMKMR.

Residues 105-112, 185-189, and 243-246 each bind GTP; these read GVEGSGKT, DTAGR, and TKMD.

It belongs to the GTP-binding SRP family. SRP54 subfamily. In terms of assembly, part of the signal recognition particle protein translocation system, which is composed of SRP and FtsY. Archaeal SRP consists of a 7S RNA molecule of 300 nucleotides and two protein subunits: SRP54 and SRP19.

Its subcellular location is the cytoplasm. The catalysed reaction is GTP + H2O = GDP + phosphate + H(+). In terms of biological role, involved in targeting and insertion of nascent membrane proteins into the cytoplasmic membrane. Binds to the hydrophobic signal sequence of the ribosome-nascent chain (RNC) as it emerges from the ribosomes. The SRP-RNC complex is then targeted to the cytoplasmic membrane where it interacts with the SRP receptor FtsY. This chain is Signal recognition particle 54 kDa protein, found in Pyrobaculum calidifontis (strain DSM 21063 / JCM 11548 / VA1).